The primary structure comprises 432 residues: UDP-glucose 6-dehydrogenase (432 aa).

NAD(+) contacts are provided by residues 2-19 (NITF…GIIM), valine 11, aspartate 30, lysine 35, threonine 121, and glutamate 152. Residues 148–152 (EFLRE), lysine 202, asparagine 206, 247–251 (FLNAG), and glycine 255 contribute to the substrate site. Catalysis depends on cysteine 258, which acts as the Nucleophile. An NAD(+)-binding site is contributed by lysine 261. Lysine 319 contacts substrate. Arginine 326 lines the NAD(+) pocket.

It belongs to the UDP-glucose/GDP-mannose dehydrogenase family.

It carries out the reaction UDP-alpha-D-glucose + 2 NAD(+) + H2O = UDP-alpha-D-glucuronate + 2 NADH + 3 H(+). The protein operates within nucleotide-sugar biosynthesis; UDP-alpha-D-glucuronate biosynthesis; UDP-alpha-D-glucuronate from UDP-alpha-D-glucose: step 1/1. The sequence is that of UDP-glucose 6-dehydrogenase (udg) from Rickettsia conorii (strain ATCC VR-613 / Malish 7).